Consider the following 2443-residue polypeptide: NFX1-type zinc finger-containing protein 1 homolog (2443 aa).

3 disordered regions span residues 212-339 (PHKQ…EGDH), 545-566 (SSDS…NVYG), and 583-672 (HRDN…FVSP). Positions 246-263 (ISISNSSPPGLSSVSPIP) are enriched in low complexity. The segment covering 275–294 (PQPPGLSIPAPPGISLPTPP) has biased composition (pro residues). Residues 297–310 (SLQNHQNDQFEQAH) are compositionally biased toward polar residues. The segment covering 311-322 (STISRMSENSSS) has biased composition (low complexity). Positions 545–564 (SSDSGRQVLSESRGAGSSNV) are enriched in polar residues. Composition is skewed to basic and acidic residues over residues 601–638 (GEVH…RRDQ) and 662–672 (EHSRDDKFVSP). Residues 1040 to 1545 (MDESQRLAFC…MNLTISDKIV (506 aa)) enclose the UvrD-like helicase ATP-binding domain. 1061–1068 (GPPGTGKT) is a binding site for ATP. 4 consecutive NF-X1-type zinc fingers follow at residues 1769–1791 (CGHV…RCLY), 1853–1873 (CGHA…ECSQ), 1912–1930 (CPHK…ECME), and 2027–2044 (CGHT…PCKA).

Belongs to the ZNFX1 family. As to quaternary structure, interacts with ego-1, csr-1, wago-1 and prg-1. Interacts with wago-4; the interaction promotes the transmission of epigenetic information across generations. As to expression, expressed in germs cells. Not expressed in somatic tissues.

It localises to the cytoplasm. Its subcellular location is the perinuclear region. The protein resides in the cytoplasmic granule. The catalysed reaction is ATP + H2O = ADP + phosphate + H(+). Epigenetic inheritance factor which, in association with the Argonaute protein wago-4, mediates small RNA-directed transgenerational epigenetic inheritance and thus balances the transgenerational inheritance of epigenetic information. Specifically, maintains a balanced production of small RNAs by preventing the spread of epigenetic signals towards the 5'-end of target mRNAs. Plays a role in small RNA-induced gene silencing in the germline. This Caenorhabditis elegans protein is NFX1-type zinc finger-containing protein 1 homolog.